Here is a 443-residue protein sequence, read N- to C-terminus: Serine/threonine-protein phosphatase 2A 55 kDa regulatory subunit B beta isoform (443 aa).

4 WD repeats span residues 22–61 (TEAD…KNQV), 87–128 (EIEE…KRPE), 171–209 (AHTY…QSFN), and 220–260 (ELTE…CVTG). Position 275 is a phosphoserine (serine 275). WD repeat units lie at residues 279-317 (KLSS…RPIE), 334-375 (ENDC…DVTL), and 410-442 (DFSK…QDKV). Residue threonine 298 is modified to Phosphothreonine.

It belongs to the phosphatase 2A regulatory subunit B family. In terms of assembly, PP2A consists of a common heterodimeric core enzyme, composed of a 36 kDa catalytic subunit (subunit C) and a 65 kDa constant regulatory subunit (PR65 or subunit A), that associates with a variety of regulatory subunits. Proteins that associate with the core dimer include three families of regulatory subunits B (the R2/B/PR55/B55, R3/B''/PR72/PR130/PR59 and R5/B'/B56 families), the 48 kDa variable regulatory subunit, viral proteins, and cell signaling molecules. Interacts with TOMM22. Interacts with IER5 (via N- and C-terminal regions). As to expression, brain.

It localises to the cytoplasm. The protein localises to the cytoskeleton. The protein resides in the membrane. The B regulatory subunit might modulate substrate selectivity and catalytic activity, and might also direct the localization of the catalytic enzyme to a particular subcellular compartment. This chain is Serine/threonine-protein phosphatase 2A 55 kDa regulatory subunit B beta isoform (PPP2R2B), found in Sus scrofa (Pig).